Reading from the N-terminus, the 968-residue chain is RNA polymerase-associated protein RapA (968 aa).

Residues 164–334 enclose the Helicase ATP-binding domain; the sequence is DVGRRHAPRV…FARLRLLDPN (171 aa). Position 177 to 184 (177 to 184) interacts with ATP; that stretch reads DEVGLGKT. Positions 280–283 match the DEAH box motif; it reads DEAH. The region spanning 490 to 685 is the Helicase C-terminal domain; the sequence is RVEWLMGYLT…ALKAQLEQGR (196 aa).

It belongs to the SNF2/RAD54 helicase family. RapA subfamily. Interacts with the RNAP. Has a higher affinity for the core RNAP than for the holoenzyme. Its ATPase activity is stimulated by binding to RNAP.

Transcription regulator that activates transcription by stimulating RNA polymerase (RNAP) recycling in case of stress conditions such as supercoiled DNA or high salt concentrations. Probably acts by releasing the RNAP, when it is trapped or immobilized on tightly supercoiled DNA. Does not activate transcription on linear DNA. Probably not involved in DNA repair. In Salmonella typhi, this protein is RNA polymerase-associated protein RapA.